A 161-amino-acid polypeptide reads, in one-letter code: Ragulator complex protein LAMTOR1 (161 aa).

Residues 1–43 (MGCCYSSENEDSDQDREERKLLLDPSSTPTKALNGAEPNYHSL) form a disordered region. G2 carries N-myristoyl glycine lipidation. S-palmitoyl cysteine attachment occurs at residues C3 and C4. K20 participates in a covalent cross-link: Glycyl lysine isopeptide (Lys-Gly) (interchain with G-Cter in ubiquitin). S27 carries the post-translational modification Phosphoserine. T28 carries the phosphothreonine modification. Residue K31 forms a Glycyl lysine isopeptide (Lys-Gly) (interchain with G-Cter in ubiquitin) linkage. S42 and S56 each carry phosphoserine. Residue K60 forms a Glycyl lysine isopeptide (Lys-Gly) (interchain with G-Cter in ubiquitin) linkage. S98 is subject to Phosphoserine. Glycyl lysine isopeptide (Lys-Gly) (interchain with G-Cter in ubiquitin) cross-links involve residues K103 and K104. Residues 121–161 (SEPIPFSDLQQVSRIAAYAYSALSQIRVDAKEELVVQFGIP) are interaction with LAMTOR2 and LAMTOR3. S141 is subject to Phosphoserine.

It belongs to the LAMTOR1 family. As to quaternary structure, part of the Ragulator complex composed of LAMTOR1, LAMTOR2, LAMTOR3, LAMTOR4 and LAMTOR5. LAMTOR4 and LAMTOR5 form a heterodimer that interacts, through LAMTOR1, with a LAMTOR2, LAMTOR3 heterodimer. Interacts with LAMTOR2 and LAMTOR3; the interaction is direct. The Ragulator complex interacts with both the mTORC1 complex and heterodimers constituted of the Rag GTPases RagA/RRAGA, RagB/RRAGB, RagC/RRAGC and RagD/RRAGD; regulated by amino acid availability. The Ragulator complex interacts with SLC38A9; the probable amino acid sensor. Component of the lysosomal folliculin complex (LFC), composed of FLCN, FNIP1 (or FNIP2), RagA/RRAGA or RagB/RRAGB GDP-bound, RagC/RRAGC or RagD/RRAGD GTP-bound, and Ragulator. Associates with the lysosomal V-ATPase complex; interaction promotes the guanine nucleotide exchange factor (GEF) of the Ragulator complex. Interacts with MMP14. Interacts with CDKN1B; prevents the interaction of CDKN1B with RHOA leaving RHOA in a form accessible to activation by ARHGEF2. Interacts with PIP4P1. In terms of processing, N-terminal myristoylation and palmitoylation mediates its recruitment to lysosome membranes, thereby promoting localization of the Ragulator complex to lysosomes. N-myristoylation by NMT1 is required for palmitoylation at Cys-3 and Cys-4. Post-translationally, ubiquitinated at Lys-60, Lys-103 and Lys-104 by UBE3A in neurons, promoting its degradation by the proteasome, thereby limiting mTORC1 signaling and activity-dependent synaptic remodeling. Ubiquitination at Lys-20 impairs the association with the lysosomal V-ATPase complex. Deubiquitination at Lys-20 by USP32 promotes the association with the lysosomal V-ATPase complex and subsequent activation of the mTORC1 complex.

It localises to the lysosome membrane. It is found in the late endosome membrane. Its function is as follows. Key component of the Ragulator complex, a multiprotein complex involved in amino acid sensing and activation of mTORC1, a signaling complex promoting cell growth in response to growth factors, energy levels, and amino acids. Activated by amino acids through a mechanism involving the lysosomal V-ATPase, the Ragulator plays a dual role for the small GTPases Rag (RagA/RRAGA, RagB/RRAGB, RagC/RRAGC and/or RagD/RRAGD): it (1) acts as a guanine nucleotide exchange factor (GEF), activating the small GTPases Rag and (2) mediates recruitment of Rag GTPases to the lysosome membrane. Activated Ragulator and Rag GTPases function as a scaffold recruiting mTORC1 to lysosomes where it is in turn activated. LAMTOR1 is directly responsible for anchoring the Ragulator complex to the lysosomal membrane. LAMTOR1 wraps around the other subunits of the Ragulator complex to hold them in place and interacts with the Rag GTPases, thereby playing a key role in the recruitment of the mTORC1 complex to lysosomes. Also involved in the control of embryonic stem cells differentiation via non-canonical RagC/RRAGC and RagD/RRAGD activation: together with FLCN, it is necessary to recruit and activate RagC/RRAGC and RagD/RRAGD at the lysosomes, and to induce exit of embryonic stem cells from pluripotency via non-canonical, mTOR-independent TFE3 inactivation. Also required for late endosomes/lysosomes biogenesis it may regulate both the recycling of receptors through endosomes and the MAPK signaling pathway through recruitment of some of its components to late endosomes. May be involved in cholesterol homeostasis regulating LDL uptake and cholesterol release from late endosomes/lysosomes. May also play a role in RHOA activation. This Mus musculus (Mouse) protein is Ragulator complex protein LAMTOR1.